A 394-amino-acid chain; its full sequence is [Pyruvate dehydrogenase (acetyl-transferring)] kinase 1, mitochondrial (394 aa).

A mitochondrion-targeting transit peptide spans 1–20 (MWKIMRSWKCGGMRWAHRQR). Positions 126–386 (AYPYELHNPP…DVYIKLKGPS (261 aa)) constitute a Histidine kinase domain. Histidine 148 is modified (phosphohistidine; by autocatalysis). ATP is bound by residues 267–274 (EVFKNAFE), aspartate 304, 323–324 (ST), and 347–352 (GMGFGL).

It belongs to the PDK/BCKDK protein kinase family. In terms of assembly, interacts with PKP2.

It localises to the mitochondrion matrix. The catalysed reaction is L-seryl-[pyruvate dehydrogenase E1 alpha subunit] + ATP = O-phospho-L-seryl-[pyruvate dehydrogenase E1 alpha subunit] + ADP + H(+). Functionally, inhibits the mitochondrial pyruvate dehydrogenase complex by phosphorylation of the E1 alpha subunit (PDA1), thus contributing to the regulation of glucose metabolism. Also involved in telomere maintenance. The chain is [Pyruvate dehydrogenase (acetyl-transferring)] kinase 1, mitochondrial from Saccharomyces cerevisiae (strain ATCC 204508 / S288c) (Baker's yeast).